Consider the following 1239-residue polypeptide: Anillin (1239 aa).

4 disordered regions span residues 32-67 (CSVPSSSATSASGGDAGVLAPRSRSPGGQSAASGGG), 230-265 (EAPPPKPHLSSRRAEKGPAPLPPKKDEVDEASRTKQ), 493-621 (FDNQ…MCNG), and 684-716 (GSTQDDQSDSGDEQNASRLSLGSKGTTASNSFS). Residues 53–63 (RSRSPGGQSAA) show a composition bias toward low complexity. The tract at residues 126–371 (EQAEGGALNP…ENKGTGGQSQ (246 aa)) is interaction with and bundling of F-actin. Residues 252-265 (PKKDEVDEASRTKQ) show a composition bias toward basic and acidic residues. Positions 500-518 (SSVAAQARPPAPAPSRVVR) are enriched in low complexity. Over residues 519–528 (PMPPPPPPPI) the composition is skewed to pro residues. Residues 551 to 563 (EDSKRARKSHSDR) are compositionally biased toward basic and acidic residues. Residues 594–610 (DEEETESCMDESDDQSQ) show a composition bias toward acidic residues. The segment covering 699–716 (ASRLSLGSKGTTASNSFS) has biased composition (polar residues). Serine 712 carries the post-translational modification Phosphoserine. Threonine 740 carries the post-translational modification Phosphothreonine. Phosphoserine occurs at positions 744 and 754. Position 831 is a phosphothreonine (threonine 831). A coiled-coil region spans residues 834-861 (DDEEMQNAREVNDASQAQDKIKKLLSEV). The region spanning 1106 to 1230 (SVEYKGFLTM…WCAYLNKALT (125 aa)) is the PH domain.

In terms of assembly, interacts with and bundles F-actin. Accumulates in the ring canals that interconnect cells of the germline cysts in males and the ovarian follicles in females. These structures develop from arrested contractile rings after a specialized cytokinesis in which the closing of the invaginating plasma membrane is incomplete. Also concentrates in the arrested cleavage furrows that initially link the oocyte to its 15 nurse cells in the early egg chamber and is subsequently lost from these furrows as germline cell division is completed.

It localises to the nucleus. The protein resides in the cytoplasm. Its subcellular location is the cytoskeleton. It is found in the cell cortex. The protein localises to the cell projection. It localises to the cilium. The protein resides in the flagellum. Required for cytokinesis. Essential for the structural integrity of the cleavage furrow and for completion of cleavage furrow ingression and proper formation of the midbody. Required during cellularization of syncytial embryos for the proper formation and function of the furrow canals, the stable inward folds of the plasma membrane which separate the peripheral nuclei. Also required for the formation of the pole cells, the progenitors of the adult germline which are formed by cytokinesis of the cytoplasmic buds at the posterior pole of the syncytial embryo. Essential for embryonic viability. This Drosophila melanogaster (Fruit fly) protein is Anillin (scra).